Here is a 202-residue protein sequence, read N- to C-terminus: Superoxide dismutase [Mn] (202 aa).

Residues His27, His82, Asp164, and His168 each contribute to the Mn(2+) site.

This sequence belongs to the iron/manganese superoxide dismutase family. Homodimer. The cofactor is Mn(2+).

It catalyses the reaction 2 superoxide + 2 H(+) = H2O2 + O2. Functionally, destroys superoxide anion radicals which are normally produced within the cells and which are toxic to biological systems. This Listeria innocua serovar 6a (strain ATCC BAA-680 / CLIP 11262) protein is Superoxide dismutase [Mn] (sodA).